We begin with the raw amino-acid sequence, 263 residues long: 5'-nucleotidase SurE (263 aa).

D10, D11, S41, and N95 together coordinate a divalent metal cation.

It belongs to the SurE nucleotidase family. Requires a divalent metal cation as cofactor.

It is found in the cytoplasm. It catalyses the reaction a ribonucleoside 5'-phosphate + H2O = a ribonucleoside + phosphate. Functionally, nucleotidase that shows phosphatase activity on nucleoside 5'-monophosphates. The protein is 5'-nucleotidase SurE of Methanoculleus marisnigri (strain ATCC 35101 / DSM 1498 / JR1).